Here is a 315-residue protein sequence, read N- to C-terminus: tRNA-dihydrouridine(16) synthase (315 aa).

FMN contacts are provided by residues 7–9 (PME) and Gln-68. Cys-98 (proton donor) is an active-site residue. FMN is bound by residues Lys-139, 200-202 (NGE), and 224-225 (GR).

It belongs to the Dus family. DusC subfamily. FMN serves as cofactor.

The enzyme catalyses 5,6-dihydrouridine(16) in tRNA + NADP(+) = uridine(16) in tRNA + NADPH + H(+). The catalysed reaction is 5,6-dihydrouridine(16) in tRNA + NAD(+) = uridine(16) in tRNA + NADH + H(+). In terms of biological role, catalyzes the synthesis of 5,6-dihydrouridine (D), a modified base found in the D-loop of most tRNAs, via the reduction of the C5-C6 double bond in target uridines. Specifically modifies U16 in tRNAs. In Shigella flexneri, this protein is tRNA-dihydrouridine(16) synthase.